Consider the following 466-residue polypeptide: Asparagine--tRNA ligase (466 aa).

Belongs to the class-II aminoacyl-tRNA synthetase family. Homodimer.

The protein localises to the cytoplasm. The catalysed reaction is tRNA(Asn) + L-asparagine + ATP = L-asparaginyl-tRNA(Asn) + AMP + diphosphate + H(+). This is Asparagine--tRNA ligase from Escherichia coli O139:H28 (strain E24377A / ETEC).